The primary structure comprises 631 residues: Integrator complex subunit 10 (631 aa).

A compositionally biased stretch (polar residues) spans 545-570 (FELTSSPNSSGTPTATTVAGGSQSRR). Residues 545–577 (FELTSSPNSSGTPTATTVAGGSQSRRIGTRGAD) form a disordered region.

The protein belongs to the Integrator subunit 10 family. As to quaternary structure, belongs to the multiprotein complex Integrator, at least composed of IntS1, IntS2, IntS3, IntS4, omd/IntS5, IntS6, defl/IntS7, IntS8, IntS9, IntS10, IntS11, IntS12, asun/IntS13, IntS14 and IntS15. The core complex associates with protein phosphatase 2A subunits mts/PP2A and Pp2A-29B, to form the Integrator-PP2A (INTAC) complex.

Its subcellular location is the nucleus. Functionally, component of the integrator complex, a multiprotein complex that terminates RNA polymerase II (Pol II) transcription in the promoter-proximal region of genes. The integrator complex provides a quality checkpoint during transcription elongation by driving premature transcription termination of transcripts that are unfavorably configured for transcriptional elongation: the complex terminates transcription by (1) catalyzing dephosphorylation of the C-terminal domain (CTD) of Pol II subunit Polr2A/Rbp1 and Spt5, and (2) degrading the exiting nascent RNA transcript via endonuclease activity. The integrator complex is also involved in the 3'-end processing of the U7 snRNA, and also the spliceosomal snRNAs U1, U2, U4 and U5. The polypeptide is Integrator complex subunit 10 (Drosophila melanogaster (Fruit fly)).